The sequence spans 901 residues: Protein translocase subunit SecA (901 aa).

Residues glutamine 87, 105–109 (GEGKT), and aspartate 512 contribute to the ATP site. Residues 859–901 (HQDDDSAAAAALAAQTGERKVGRNDPCPCGSGKKYKQCHGRLQ) form a disordered region. Positions 885, 887, 896, and 897 each coordinate Zn(2+). Positions 891 to 901 (KKYKQCHGRLQ) are enriched in basic residues.

Belongs to the SecA family. As to quaternary structure, monomer and homodimer. Part of the essential Sec protein translocation apparatus which comprises SecA, SecYEG and auxiliary proteins SecDF-YajC and YidC. Zn(2+) serves as cofactor.

Its subcellular location is the cell inner membrane. It localises to the cytoplasm. It catalyses the reaction ATP + H2O + cellular proteinSide 1 = ADP + phosphate + cellular proteinSide 2.. In terms of biological role, part of the Sec protein translocase complex. Interacts with the SecYEG preprotein conducting channel. Has a central role in coupling the hydrolysis of ATP to the transfer of proteins into and across the cell membrane, serving both as a receptor for the preprotein-SecB complex and as an ATP-driven molecular motor driving the stepwise translocation of polypeptide chains across the membrane. The sequence is that of Protein translocase subunit SecA from Escherichia coli O157:H7.